A 142-amino-acid chain; its full sequence is Extracellular globin-1 (142 aa).

Positions 1–142 (ECLVTEGLKV…DQIIDGIKDI (142 aa)) constitute a Globin domain. C2 and C131 are disulfide-bonded. H94 lines the heme b pocket.

The protein belongs to the globin family. The extracellular hemoglobin of the earthworm consists of 12 subunits that have a hexagonal bilayer structure with a molecular weight near 3.8 million. Each one-twelfth subunit is composed primarily of disulfide linked trimers (chains A, B, and C) and monomers (chain D).

This is Extracellular globin-1 from Lumbricus terrestris (Common earthworm).